A 334-amino-acid chain; its full sequence is Ephrin-B1 (334 aa).

A signal peptide spans 1-25; the sequence is MARPRGGRWLLGVLLALCRLAAPLA. The Ephrin RBD domain occupies 26 to 160; the sequence is KSLEPVSWSA…TRSMKIVMKV (135 aa). Topologically, residues 26-231 are extracellular; the sequence is KSLEPVSWSA…FLSSKVAVFA (206 aa). 2 cysteine pairs are disulfide-bonded: cysteine 60/cysteine 97 and cysteine 85/cysteine 149. Asparagine 135 carries N-linked (GlcNAc...) asparagine glycosylation. Residues 175-218 form a disordered region; it reads SRPSKEADNTVKIVTQSPRHKVPTVEEPGKPGSVNQNGQETQGP. Polar residues predominate over residues 207-218; that stretch reads SVNQNGQETQGP. A helical transmembrane segment spans residues 232–252; that stretch reads AIGAGCVIFILIIIFLVVLLI. At 253-334 the chain is on the cytoplasmic side; the sequence is KIRKRHRKHT…QSPANIYYKV (82 aa). Positions 332 to 334 match the PDZ-binding motif; that stretch reads YKV.

It belongs to the ephrin family. As to quaternary structure, binds to the receptor tyrosine kinase EPHB2. Interacts with GRIP1 and GRIP2. Inducible phosphorylation of tyrosine residues in the cytoplasmic domain.

The protein resides in the membrane. Functionally, cell surface transmembrane ligand for Eph receptors, a family of receptor tyrosine kinases which are crucial for migration, repulsion and adhesion during neuronal, vascular and epithelial development. Binds promiscuously Eph receptors residing on adjacent cells, leading to contact-dependent bidirectional signaling into neighboring cells. The signaling pathway downstream of the receptor is referred to as forward signaling while the signaling pathway downstream of the ephrin ligand is referred to as reverse signaling. The protein is Ephrin-B1 (EFNB1) of Gallus gallus (Chicken).